We begin with the raw amino-acid sequence, 785 residues long: Ribosome biogenesis protein BOP1 homolog (785 aa).

Basic residues predominate over residues 1-11 (MTKKLTIKRKV). The tract at residues 1–160 (MTKKLTIKRK…DSDTSDEEDI (160 aa)) is disordered. Composition is skewed to acidic residues over residues 45-54 (EDSTDDEGID), 61-73 (SSEDLEFESDEEG), and 85-102 (SGDDDEESAEDEEEEDDA). Residues 103 to 112 (DAKKSSKNND) are compositionally biased toward basic and acidic residues. The segment covering 150 to 159 (ADSDTSDEED) has biased composition (acidic residues). 7 WD repeats span residues 446 to 487 (GHTD…RTIE), 489 to 527 (EDVVRCVAWCPNAKLSIIAVATGSRLLLVNPKVGDKLLV), 571 to 613 (THFK…SQIP), 616 to 654 (KSKGLIQCVLFHPVKPCFFVATQHNIRIYDLVKQELIKK), 657 to 696 (TNSKWISGMSIHPKGDNLLVSTYDKKMLWFDLDLSTKPYQ), 700 to 739 (LHRNAVRSVAFHLRYPLFASGSDDQAVIVSHGMVYNDLLQ), and 755 to 785 (REEFGVLDVNWHPVQPWVFSTGADCTIRLFT).

It belongs to the WD repeat BOP1/ERB1 family.

Its subcellular location is the nucleus. It is found in the nucleolus. The protein localises to the nucleoplasm. Required for maturation of ribosomal RNAs and formation of the large ribosomal subunit. This chain is Ribosome biogenesis protein BOP1 homolog, found in Drosophila persimilis (Fruit fly).